The sequence spans 639 residues: Coiled-coil domain-containing protein 27 (639 aa).

The segment at 154-176 is disordered; that stretch reads YPRKRSEPSDPSPTGSPTVVKKS. The stretch at 203–242 forms a coiled coil; sequence QRFSEMESQMQKKDQEILTLQKEKEALKKQLKNLLRGKGT. Residues 291–385 form a disordered region; that stretch reads ESSKELHVEP…EECHPKRSYS (95 aa). Residues 292 to 309 show a composition bias toward basic and acidic residues; that stretch reads SSKELHVEPGSAIEEKSS. The segment covering 310-320 has biased composition (low complexity); sequence EGPPEEAAAAK. 2 stretches are compositionally biased toward acidic residues: residues 336-350 and 358-369; these read GPEE…EVEG and EGEILVNEEEAS. A compositionally biased stretch (basic and acidic residues) spans 370–380; it reads WELREDEECHP.

In Mus musculus (Mouse), this protein is Coiled-coil domain-containing protein 27 (Ccdc27).